The primary structure comprises 709 residues: DNA topoisomerase 1 (709 aa).

The region spanning 3–127 (KNLVVIESPN…KCKRITFNEI (125 aa)) is the Toprim domain. Mg(2+) contacts are provided by Glu9 and Asp95. The Topo IA-type catalytic domain occupies 143–598 (DLNWVESQFA…FWTNFKSDVK (456 aa)). An interaction with DNA region spans residues 176 to 181 (SAGRVQ). Tyr334 acts as the O-(5'-phospho-DNA)-tyrosine intermediate in catalysis. 2 C4-type zinc fingers span residues 618-646 (CPKC…FPKC) and 667-696 (CPEC…FPNC).

This sequence belongs to the type IA topoisomerase family. As to quaternary structure, monomer. Mg(2+) is required as a cofactor.

The enzyme catalyses ATP-independent breakage of single-stranded DNA, followed by passage and rejoining.. In terms of biological role, releases the supercoiling and torsional tension of DNA, which is introduced during the DNA replication and transcription, by transiently cleaving and rejoining one strand of the DNA duplex. Introduces a single-strand break via transesterification at a target site in duplex DNA. The scissile phosphodiester is attacked by the catalytic tyrosine of the enzyme, resulting in the formation of a DNA-(5'-phosphotyrosyl)-enzyme intermediate and the expulsion of a 3'-OH DNA strand. The free DNA strand then undergoes passage around the unbroken strand, thus removing DNA supercoils. Finally, in the religation step, the DNA 3'-OH attacks the covalent intermediate to expel the active-site tyrosine and restore the DNA phosphodiester backbone. This chain is DNA topoisomerase 1, found in Mycoplasma genitalium (strain ATCC 33530 / DSM 19775 / NCTC 10195 / G37) (Mycoplasmoides genitalium).